Reading from the N-terminus, the 646-residue chain is MNIRSNPDTTRPAVTTGGLPSSRKIYAVPATAPDLRVPLREIMLSEGAGEPNLPVYDTSGPYTDPGVTIDVNKGLSRARTEWVKQRGGVEQYEGRDIKPEDNGNVGAAHAAKSFTAHHQPLRGVGDAPITQYEFARKGIITKEMIYVAERENLGRKQQLERAEAALADGESFGAAVPAFITPEFVRDEIARGRAIIPANINHGELEPMIIGRNFLTKINANIGNSAVTSSVEEEVDKMVWAIRWGADTVMDLSTGRNIHTTREWILRNSPVPIGTVPIYQALEKCDGDPVKLTWELYKDTLIEQAEQGVDYFTIHAGVRLQYIHLTADRVTGIVSRGGSIMAKWCLAHHQESFLYTHFDEICDLMRKYDVSFSLGDGLRPGSIADANDRAQFAELETLGELTKIAWAKGCQVMIEGPGHVPLHKIKINMDKQLKECGEAPFYTLGPLTTDIAPGYDHITSGIGAAMIGWFGCAMLCYVTPKEHLGLPDRNDVKTGVITYKIAAHAADLGKGHPAAQLRDDALSRARFDFRWQDQFNLGLDPDTAKAFHDETLPKEAHKVAHFCSMCGPKFCSMKITQDVRDYAAGLGDNEKAALNLAGAGSFGSVGMTMSGVIEDGMAQMSEKFRDMGEKLYLDAEKVKESNKALS.

Residues 1–13 show a composition bias toward polar residues; sequence MNIRSNPDTTRPA. Positions 1 to 21 are disordered; it reads MNIRSNPDTTRPAVTTGGLPS. Substrate is bound by residues asparagine 221, methionine 250, tyrosine 279, histidine 315, 335 to 337, 376 to 379, and glutamate 415; these read SRG and DGLR. Histidine 419 lines the Zn(2+) pocket. A substrate-binding site is contributed by tyrosine 442. Histidine 483 provides a ligand contact to Zn(2+). 3 residues coordinate [4Fe-4S] cluster: cysteine 563, cysteine 566, and cysteine 571.

The protein belongs to the ThiC family. As to quaternary structure, homodimer. The cofactor is [4Fe-4S] cluster.

It carries out the reaction 5-amino-1-(5-phospho-beta-D-ribosyl)imidazole + S-adenosyl-L-methionine = 4-amino-2-methyl-5-(phosphooxymethyl)pyrimidine + CO + 5'-deoxyadenosine + formate + L-methionine + 3 H(+). It functions in the pathway cofactor biosynthesis; thiamine diphosphate biosynthesis. Its function is as follows. Catalyzes the synthesis of the hydroxymethylpyrimidine phosphate (HMP-P) moiety of thiamine from aminoimidazole ribotide (AIR) in a radical S-adenosyl-L-methionine (SAM)-dependent reaction. In Rhodopseudomonas palustris (strain HaA2), this protein is Phosphomethylpyrimidine synthase.